We begin with the raw amino-acid sequence, 524 residues long: Cytochrome P450 monooxygenase alt1 (524 aa).

A helical membrane pass occupies residues 24-44 (IANMLSVIAFSICISPIVYFL). C469 contacts heme.

The protein belongs to the cytochrome P450 family. Heme serves as cofactor.

It is found in the membrane. Its pathway is secondary metabolite biosynthesis. In terms of biological role, cytochrome P450 monooxygenase; part of the gene cluster that mediates the biosynthesis of alternapyrone derivatives. Alternapyrone is a decaketide with octa-methylation from methionine on every C2 unit except the third unit. All the domains in the polyketide synthase alt5 are apparently involved in alternapyrone synthesis, that is, the 8 CMeT, 7 KR, 7 DH, and 4 ER reactions in the 9 KS-mediated condensation steps required for alternapyrone synthesis. the alternapyrone produced by alt5 might be intensively modified by cytochrome P450 monooxygenases alt1, alt2 and alt3 and FAD-dependent oxidoreductase alt4 present in the alt gene cluster. This is Cytochrome P450 monooxygenase alt1 from Alternaria solani.